Reading from the N-terminus, the 249-residue chain is 5'-nucleotidase SurE (249 aa).

Residues aspartate 8, aspartate 9, serine 39, and asparagine 91 each contribute to the a divalent metal cation site.

It belongs to the SurE nucleotidase family. A divalent metal cation serves as cofactor.

The protein resides in the cytoplasm. It catalyses the reaction a ribonucleoside 5'-phosphate + H2O = a ribonucleoside + phosphate. In terms of biological role, nucleotidase that shows phosphatase activity on nucleoside 5'-monophosphates. In Pseudomonas syringae pv. tomato (strain ATCC BAA-871 / DC3000), this protein is 5'-nucleotidase SurE.